The primary structure comprises 942 residues: Cilia- and flagella-associated protein 69 (942 aa).

The span at 1–16 (MSTAEASATTADAAEA) shows a compositional bias: low complexity. The disordered stretch occupies residues 1–25 (MSTAEASATTADAAEAGGRTKTGSP).

As to expression, expressed in ciliated olfactory sensory neurons (at protein level). Expressed in testis, specifically in sperm (at protein level).

It localises to the cell projection. Its subcellular location is the cilium. It is found in the flagellum. Functionally, cilium- and flagellum-associated protein. In the olfactory epithelium, regulates the speed of activation and termination of the odor response and thus contributes to the robustness of olfactory transduction pathways. Required for sperm flagellum assembly and stability. The chain is Cilia- and flagella-associated protein 69 from Mus musculus (Mouse).